Here is a 447-residue protein sequence, read N- to C-terminus: N-succinylarginine dihydrolase (447 aa).

Residues 19-28 (AGLSFGNEAS), Asn-110, and 137-138 (HR) each bind substrate. Residue Glu-174 is part of the active site. Arg-212 is a substrate binding site. His-248 is an active-site residue. The substrate site is built by Asp-250 and Asn-359. Cys-365 serves as the catalytic Nucleophile.

The protein belongs to the succinylarginine dihydrolase family. In terms of assembly, homodimer.

The catalysed reaction is N(2)-succinyl-L-arginine + 2 H2O + 2 H(+) = N(2)-succinyl-L-ornithine + 2 NH4(+) + CO2. Its pathway is amino-acid degradation; L-arginine degradation via AST pathway; L-glutamate and succinate from L-arginine: step 2/5. Catalyzes the hydrolysis of N(2)-succinylarginine into N(2)-succinylornithine, ammonia and CO(2). The polypeptide is N-succinylarginine dihydrolase (Escherichia coli O6:K15:H31 (strain 536 / UPEC)).